The primary structure comprises 174 residues: Large ribosomal subunit protein bL12cz (174 aa).

A chloroplast-targeting transit peptide spans 1-45; it reads MASTTFSSAFSILSLPSSSPSPPPSPPRTLPVANRRRRAAAVAST. A disordered region spans residues 1–46; it reads MASTTFSSAFSILSLPSSSPSPPPSPPRTLPVANRRRRAAAVASTA. The segment covering 7-18 has biased composition (low complexity); the sequence is SSAFSILSLPSS. The segment covering 19–29 has biased composition (pro residues); it reads SPSPPPSPPRT.

The protein belongs to the bacterial ribosomal protein bL12 family.

Its subcellular location is the plastid. The protein localises to the chloroplast. The chain is Large ribosomal subunit protein bL12cz (RPL12-1) from Secale cereale (Rye).